A 187-amino-acid chain; its full sequence is Ribosome maturation factor RimM (187 aa).

The 75-residue stretch at 94-168 (DDEFYHADLV…RVIVDMPDGL (75 aa)) folds into the PRC barrel domain. Residues 167-187 (GLIGGDKPDTSDTAPLGQDFD) form a disordered region.

The protein belongs to the RimM family. In terms of assembly, binds ribosomal protein uS19.

The protein resides in the cytoplasm. Functionally, an accessory protein needed during the final step in the assembly of 30S ribosomal subunit, possibly for assembly of the head region. Essential for efficient processing of 16S rRNA. May be needed both before and after RbfA during the maturation of 16S rRNA. It has affinity for free ribosomal 30S subunits but not for 70S ribosomes. The protein is Ribosome maturation factor RimM of Jannaschia sp. (strain CCS1).